We begin with the raw amino-acid sequence, 158 residues long: Large ribosomal subunit protein uL16 (158 aa).

This sequence belongs to the universal ribosomal protein uL16 family. Part of the 50S ribosomal subunit.

Functionally, binds 23S rRNA and is also seen to make contacts with the A and possibly P site tRNAs. The protein is Large ribosomal subunit protein uL16 of Prochlorococcus marinus (strain MIT 9303).